The primary structure comprises 502 residues: ATP synthase subunit alpha (502 aa).

ATP is bound at residue 169–176 (GDRQTGKT).

It belongs to the ATPase alpha/beta chains family. In terms of assembly, F-type ATPases have 2 components, CF(1) - the catalytic core - and CF(0) - the membrane proton channel. CF(1) has five subunits: alpha(3), beta(3), gamma(1), delta(1), epsilon(1). CF(0) has three main subunits: a(1), b(2) and c(9-12). The alpha and beta chains form an alternating ring which encloses part of the gamma chain. CF(1) is attached to CF(0) by a central stalk formed by the gamma and epsilon chains, while a peripheral stalk is formed by the delta and b chains.

It is found in the cell inner membrane. It carries out the reaction ATP + H2O + 4 H(+)(in) = ADP + phosphate + 5 H(+)(out). Produces ATP from ADP in the presence of a proton gradient across the membrane. The alpha chain is a regulatory subunit. The protein is ATP synthase subunit alpha of Geotalea daltonii (strain DSM 22248 / JCM 15807 / FRC-32) (Geobacter daltonii).